The chain runs to 83 residues: Small ribosomal subunit protein bS16 (83 aa).

It belongs to the bacterial ribosomal protein bS16 family.

In Finegoldia magna (strain ATCC 29328 / DSM 20472 / WAL 2508) (Peptostreptococcus magnus), this protein is Small ribosomal subunit protein bS16.